The chain runs to 301 residues: G-protein coupled receptor homolog U51 (301 aa).

Over 1-15 (MEKETKSLAWPATAE) the chain is Extracellular. The helical transmembrane segment at 16–36 (FYGWVFIFSSIQLCTMVLLTV) threads the bilayer. At 37–48 (RFNSFKVGREYA) the chain is on the cytoplasmic side. The helical transmembrane segment at 49–69 (VFTFAGMSFNCFLLPIKMGLL) threads the bilayer. Residues 70–82 (SGHWSLPRDFCAI) lie on the Extracellular side of the membrane. Residues 83-103 (LLYIDDFSIYFSSWSLVFMAI) traverse the membrane as a helical segment. Residues 104 to 122 (ERINHFCYSTPLLNENSKA) are Cytoplasmic-facing. The helical transmembrane segment at 123–143 (LAKVCFPIVWIISGVQALQML) threads the bilayer. Residues 144–168 (NNYKATALQNETPQCFLAFLRSGYD) are Extracellular-facing. A helical transmembrane segment spans residues 169–189 (MWLMLVYSVMIPVMLVFIYIY). Residues 190 to 199 (SKNFMLLKDE) are Cytoplasmic-facing. Residues 200-220 (LSTVTTYLCIYLLLGTIAHLP) traverse the membrane as a helical segment. Residues 221-238 (KAGLSEIESDKIFYGLRD) lie on the Extracellular side of the membrane. A helical membrane pass occupies residues 239–259 (IFMALPVLKVYYIPVMAYCMA). Residues 260 to 301 (CDDHTVPVRLCSIWLVNLCKKCFSCTRREKESDLEVGIKMLK) lie on the Cytoplasmic side of the membrane.

Belongs to the G-protein coupled receptor 1 family.

The protein localises to the host cell membrane. The sequence is that of G-protein coupled receptor homolog U51 (U51) from Homo sapiens (Human).